We begin with the raw amino-acid sequence, 84 residues long: Putative membrane protein insertion efficiency factor (84 aa).

The interval 63 to 84 (GEDPVPNHFTLRRNKKEKPSKS) is disordered.

Belongs to the UPF0161 family.

The protein resides in the cell membrane. Functionally, could be involved in insertion of integral membrane proteins into the membrane. This Streptococcus mutans serotype c (strain ATCC 700610 / UA159) protein is Putative membrane protein insertion efficiency factor.